Reading from the N-terminus, the 325-residue chain is Dehydrogenase/reductase SDR family member 7B (325 aa).

The Cytoplasmic segment spans residues M1–D17. The chain crosses the membrane as a helical; Signal-anchor for type II membrane protein span at residues L18–F38. The Lumenal portion of the chain corresponds to R39–S325. NAD(+) contacts are provided by S62 and L64. S194 contributes to the substrate binding site. NAD(+) is bound by residues Y207, K211, and T242. The Proton acceptor role is filled by Y207.

It belongs to the short-chain dehydrogenases/reductases (SDR) family.

It is found in the endoplasmic reticulum membrane. Functionally, putative oxidoreductase. This Rattus norvegicus (Rat) protein is Dehydrogenase/reductase SDR family member 7B (Dhrs7b).